The sequence spans 339 residues: tRNA N6-adenosine threonylcarbamoyltransferase (339 aa).

2 residues coordinate Fe cation: His-111 and His-115. Substrate is bound by residues 134-138 (LVSGG), Asp-167, Gly-180, and Asn-270. Asp-298 is a binding site for Fe cation.

The protein belongs to the KAE1 / TsaD family. It depends on Fe(2+) as a cofactor.

The protein localises to the cytoplasm. The enzyme catalyses L-threonylcarbamoyladenylate + adenosine(37) in tRNA = N(6)-L-threonylcarbamoyladenosine(37) in tRNA + AMP + H(+). Its function is as follows. Required for the formation of a threonylcarbamoyl group on adenosine at position 37 (t(6)A37) in tRNAs that read codons beginning with adenine. Is involved in the transfer of the threonylcarbamoyl moiety of threonylcarbamoyl-AMP (TC-AMP) to the N6 group of A37, together with TsaE and TsaB. TsaD likely plays a direct catalytic role in this reaction. This chain is tRNA N6-adenosine threonylcarbamoyltransferase, found in Alkalilimnicola ehrlichii (strain ATCC BAA-1101 / DSM 17681 / MLHE-1).